A 235-amino-acid polypeptide reads, in one-letter code: RING-H2 finger protein ATL17 (235 aa).

A helical membrane pass occupies residues 1-21 (MLTTTILILLIVILMVSLHLY). Residues 76 to 118 (CSVCLSEFKDNESGRVMPNCKHTFHVHCIDMWFHSHSSCPLCR) form an RING-type; atypical zinc finger. Residues 143–167 (VYGDTNHHEGTETTGDSVPEDSQRK) form a disordered region.

This sequence belongs to the RING-type zinc finger family. ATL subfamily.

The protein localises to the membrane. It catalyses the reaction S-ubiquitinyl-[E2 ubiquitin-conjugating enzyme]-L-cysteine + [acceptor protein]-L-lysine = [E2 ubiquitin-conjugating enzyme]-L-cysteine + N(6)-ubiquitinyl-[acceptor protein]-L-lysine.. It functions in the pathway protein modification; protein ubiquitination. Its function is as follows. May be involved in the early steps of the plant defense signaling pathway. This Arabidopsis thaliana (Mouse-ear cress) protein is RING-H2 finger protein ATL17 (ATL17).